A 135-amino-acid chain; its full sequence is NNCPQDWLPMNGLCYKIFDEQKAWEDAEMFCRKYKPGCHLASFHRYGESLEIAEYISDYHKGQAEVWIGLWDKKKDFSWEWTDRSCTDYLTWDKNQPDHYEGKEFCVELVSLTGYRLWNDQVCESKNAFLCQCKF.

Cystine bridges form between Cys-3–Cys-14, Cys-31–Cys-131, Cys-38–Cys-133, and Cys-106–Cys-123. In terms of domain architecture, C-type lectin spans 10–132 (MNGLCYKIFD…CESKNAFLCQ (123 aa)). Ca(2+)-binding residues include Gln-96, Asp-98, Glu-104, Asn-119, and Asp-120. The short motif at 96–98 (QPD) is the Galactose-binding element.

Belongs to the true venom lectin family. Homodimer; disulfide-linked. Expressed by the venom gland.

It is found in the secreted. In terms of biological role, galactose-binding protein which recognizes specific carbohydrate structures and agglutinates a variety of animal cells by binding to cell-surface glycoproteins and glycolipids. Is a calcium-dependent lectin. Shows high hemagglutinating activity, that is inhibited by lactose, galactose and inositol. This is C-type lectin LmsL from Lachesis stenophrys (Central American bushmaster).